Consider the following 105-residue polypeptide: uncharacterized protein (105 aa).

A helical membrane pass occupies residues 4 to 26 (TQILLILFVGILVTTPHDIFIII).

Its subcellular location is the membrane. This is an uncharacterized protein from Rickettsia conorii (strain ATCC VR-613 / Malish 7).